The chain runs to 199 residues: Recombination protein RecR (199 aa).

A C4-type zinc finger spans residues 58–73 (CSICNNITDVDPCTYC). A Toprim domain is found at 81-176 (QVICVVEEPT…RVTRIATGVP (96 aa)).

This sequence belongs to the RecR family.

In terms of biological role, may play a role in DNA repair. It seems to be involved in an RecBC-independent recombinational process of DNA repair. It may act with RecF and RecO. The protein is Recombination protein RecR of Koribacter versatilis (strain Ellin345).